Here is a 421-residue protein sequence, read N- to C-terminus: Histidine--tRNA ligase (421 aa).

The protein belongs to the class-II aminoacyl-tRNA synthetase family. Homodimer.

The protein localises to the cytoplasm. The catalysed reaction is tRNA(His) + L-histidine + ATP = L-histidyl-tRNA(His) + AMP + diphosphate + H(+). This chain is Histidine--tRNA ligase, found in Francisella tularensis subsp. holarctica (strain FTNF002-00 / FTA).